A 304-amino-acid chain; its full sequence is Protoheme IX farnesyltransferase 1 (304 aa).

8 helical membrane passes run 24–44, 47–67, 99–119, 122–142, 150–170, 176–196, 228–248, and 280–300; these read VVVL…KAPL, FVPW…AGAA, MALG…LAFT, LTAW…TGFL, IVIG…AITG, PLLL…ALCI, LVLF…LVYL, and YSIV…YLPL.

It belongs to the UbiA prenyltransferase family. Protoheme IX farnesyltransferase subfamily.

It localises to the cell inner membrane. The enzyme catalyses heme b + (2E,6E)-farnesyl diphosphate + H2O = Fe(II)-heme o + diphosphate. It functions in the pathway porphyrin-containing compound metabolism; heme O biosynthesis; heme O from protoheme: step 1/1. In terms of biological role, converts heme B (protoheme IX) to heme O by substitution of the vinyl group on carbon 2 of heme B porphyrin ring with a hydroxyethyl farnesyl side group. The polypeptide is Protoheme IX farnesyltransferase 1 (Pseudomonas paraeruginosa (strain DSM 24068 / PA7) (Pseudomonas aeruginosa (strain PA7))).